The chain runs to 248 residues: MGQKTNPNGLRLGIIRSWESKWYANEKDVPALINEDYNIRKYLNKVYKKAGVSQIEIERLKGKAKDRIKVTLYTAKPGIVIGRDGETRNKAVSELEYLTKKEIVFNVVEVKRPEKVAELVAQNMAEQLENRASFRRVQKIAIQRALKSGAKGVKTLVSGRLGGAEMARSEGYSEGRVPLHTLRADVDYATAEAHTTYGVLGIKVWVFHGEVLPGQTILDTRKPFEASAPRPQRRNRKEANNYVNAKKN.

A KH type-2 domain is found at 39 to 111 (IRKYLNKVYK…EIVFNVVEVK (73 aa)). Residues 222–248 (KPFEASAPRPQRRNRKEANNYVNAKKN) are disordered.

Belongs to the universal ribosomal protein uS3 family. In terms of assembly, part of the 30S ribosomal subunit. Forms a tight complex with proteins S10 and S14.

Its function is as follows. Binds the lower part of the 30S subunit head. Binds mRNA in the 70S ribosome, positioning it for translation. The polypeptide is Small ribosomal subunit protein uS3 (Alteracholeplasma palmae (strain ATCC 49389 / J233) (Acholeplasma palmae)).